The sequence spans 471 residues: MKIKTRFAPSPTGYLHVGGARTALYSWLFARHHGGEFVLRIEDTDLERSTPEAIEAIMDGMNWLNLEWDEGPYFQTKRFDRYNAVIDEMLEAGTAYKCYCSKERLEQLREEQMAKGEKPRYDGRCRHSYEHHADDEPCVVRFANPQDGSVIFDDQIRGPIEFSNQELDDLIIRRTDGSPTYNFCVVVDDWDMEITHVIRGEDHINNTPRQINILKALNAPVPMYAHVSMINGDDGKKLSKRHGAVSVMQYRDDGYLPEALLNYLVRLGWSSGDQEIFTREEMIKLFSLGAVSKSASAFNTDKLLWLNHHYINTLAPEYVATHLQWHIEQENIDTRNGPQLAELVKLLGERCKTLKEMAQSCRYFYEDFSEFDADAAKKHLRPVARQPLEVVRDKLSAITDWSAENVHHAIQATADELEVGMGKVGMPLRVAVTGAGQSPALDVTVHAIGKTRSIERINKALGFIAERESQQ.

A 'HIGH' region motif is present at residues 9–19 (PSPTGYLHVGG). Positions 98, 100, 125, and 127 each coordinate Zn(2+). The 'KMSKS' region motif lies at 237-241 (KLSKR). K240 is a binding site for ATP.

It belongs to the class-I aminoacyl-tRNA synthetase family. Glutamate--tRNA ligase type 1 subfamily. As to quaternary structure, monomer. The cofactor is Zn(2+).

The protein localises to the cytoplasm. The enzyme catalyses tRNA(Glu) + L-glutamate + ATP = L-glutamyl-tRNA(Glu) + AMP + diphosphate. Functionally, catalyzes the attachment of glutamate to tRNA(Glu) in a two-step reaction: glutamate is first activated by ATP to form Glu-AMP and then transferred to the acceptor end of tRNA(Glu). In Salmonella enteritidis PT4 (strain P125109), this protein is Glutamate--tRNA ligase.